A 603-amino-acid polypeptide reads, in one-letter code: Elongation factor 4 (603 aa).

In terms of domain architecture, tr-type G spans 9 to 191; that stretch reads SNIRNFSIIA…RIVRQIPPPK (183 aa). GTP is bound by residues 21-26 and 138-141; these read DHGKST and NKID.

It belongs to the TRAFAC class translation factor GTPase superfamily. Classic translation factor GTPase family. LepA subfamily.

It is found in the cell inner membrane. The enzyme catalyses GTP + H2O = GDP + phosphate + H(+). Required for accurate and efficient protein synthesis under certain stress conditions. May act as a fidelity factor of the translation reaction, by catalyzing a one-codon backward translocation of tRNAs on improperly translocated ribosomes. Back-translocation proceeds from a post-translocation (POST) complex to a pre-translocation (PRE) complex, thus giving elongation factor G a second chance to translocate the tRNAs correctly. Binds to ribosomes in a GTP-dependent manner. The polypeptide is Elongation factor 4 (Idiomarina loihiensis (strain ATCC BAA-735 / DSM 15497 / L2-TR)).